The primary structure comprises 135 residues: 2-iminobutanoate/2-iminopropanoate deaminase (135 aa).

N-acetylserine is present on S2. K13, K60, K67, and K134 each carry N6-succinyllysine.

It belongs to the RutC family. In terms of assembly, homotrimer. Interacts with YTHDF2. In terms of tissue distribution, expressed predominantly in liver and kidney. Lower levels in lung and brain.

It is found in the cytoplasm. The protein localises to the nucleus. The protein resides in the peroxisome. It localises to the mitochondrion. It carries out the reaction 2-iminobutanoate + H2O = 2-oxobutanoate + NH4(+). It catalyses the reaction 2-iminopropanoate + H2O = pyruvate + NH4(+). In terms of biological role, catalyzes the hydrolytic deamination of enamine/imine intermediates that form during the course of normal metabolism. May facilitate the release of ammonia from these potentially toxic reactive metabolites, reducing their impact on cellular components. It may act on enamine/imine intermediates formed by several types of pyridoxal-5'-phosphate-dependent dehydratases including L-threonine dehydratase. Functionally, also promotes endoribonucleolytic cleavage of some transcripts by promoting recruitment of the ribonuclease P/MRP complex. Acts by bridging YTHDF2 and the ribonuclease P/MRP complex. RIDA/HRSP12 binds to N6-methyladenosine (m6A)-containing mRNAs containing a 5'-GGUUC-3' motif: cooperative binding of RIDA/HRSP12 and YTHDF2 to such transcripts lead to recruitment of the ribonuclease P/MRP complex and subsequent endoribonucleolytic cleavage. The chain is 2-iminobutanoate/2-iminopropanoate deaminase from Mus musculus (Mouse).